The chain runs to 568 residues: 2-succinyl-5-enolpyruvyl-6-hydroxy-3-cyclohexene-1-carboxylate synthase (568 aa).

It belongs to the TPP enzyme family. MenD subfamily. As to quaternary structure, homodimer. It depends on Mg(2+) as a cofactor. Mn(2+) serves as cofactor. Requires thiamine diphosphate as cofactor.

The catalysed reaction is isochorismate + 2-oxoglutarate + H(+) = 5-enolpyruvoyl-6-hydroxy-2-succinyl-cyclohex-3-ene-1-carboxylate + CO2. Its pathway is quinol/quinone metabolism; 1,4-dihydroxy-2-naphthoate biosynthesis; 1,4-dihydroxy-2-naphthoate from chorismate: step 2/7. The protein operates within quinol/quinone metabolism; menaquinone biosynthesis. Functionally, catalyzes the thiamine diphosphate-dependent decarboxylation of 2-oxoglutarate and the subsequent addition of the resulting succinic semialdehyde-thiamine pyrophosphate anion to isochorismate to yield 2-succinyl-5-enolpyruvyl-6-hydroxy-3-cyclohexene-1-carboxylate (SEPHCHC). In Haemophilus influenzae (strain PittEE), this protein is 2-succinyl-5-enolpyruvyl-6-hydroxy-3-cyclohexene-1-carboxylate synthase.